A 517-amino-acid polypeptide reads, in one-letter code: Ribonuclease Y (517 aa).

The chain crosses the membrane as a helical span at residues 1–21 (MIEVVVGIGAGLIGIGAGYLV). Positions 207–273 (LINVVNIKND…TRVIELLVED (67 aa)) constitute a KH domain. The region spanning 333 to 426 (ALAHSLEVAH…VCAADALSAA (94 aa)) is the HD domain.

It belongs to the RNase Y family.

Its subcellular location is the cell membrane. Endoribonuclease that initiates mRNA decay. The protein is Ribonuclease Y of Campylobacter fetus subsp. fetus (strain 82-40).